Reading from the N-terminus, the 476-residue chain is MNFKSTIGLEVHFELKTKSKIFSPSPVSYGAEANTETNVIDWAMPGVLPRLNKDVYRLGIMVALATHSHVLPVTHFDRKNYFYPDNPKAYQITQFFQPLARDGYIEIEVRGKKKRIGIHEMHIEEDAGKNTHGANGYSYVDLNRQGVPLLEVVSEPDMEDPEEAYAYLTKLRQIVQFTGASDVKMEEGSMRVDTNISIRPAGQEKLGTKVEMKNLNSFDHVRRSLAYEEKRQQQVLLSGGRVQLSTRRFDEATGKTVLERVKEGDADYRYFPEPDIAPYHIKQSWIDEIEESLPESPFERRKRYVEEYGIKEYDADVILQTKESSDFYDAAVAAGADPTLAANWLNTQVNGYLNENQVGIADIKLTPEHLAEMIKMIKDGTISSKIAKKVFKESIENGTDPKKYVEDKGMVQLSDVSVLGPMVTKVVDDNPQSVEDFKNGKDRAIGFLVGQIMKQTRGKANPKVVNQLLNKELQSR.

It belongs to the GatB/GatE family. GatB subfamily. As to quaternary structure, heterotrimer of A, B and C subunits.

It catalyses the reaction L-glutamyl-tRNA(Gln) + L-glutamine + ATP + H2O = L-glutaminyl-tRNA(Gln) + L-glutamate + ADP + phosphate + H(+). It carries out the reaction L-aspartyl-tRNA(Asn) + L-glutamine + ATP + H2O = L-asparaginyl-tRNA(Asn) + L-glutamate + ADP + phosphate + 2 H(+). Its function is as follows. Allows the formation of correctly charged Asn-tRNA(Asn) or Gln-tRNA(Gln) through the transamidation of misacylated Asp-tRNA(Asn) or Glu-tRNA(Gln) in organisms which lack either or both of asparaginyl-tRNA or glutaminyl-tRNA synthetases. The reaction takes place in the presence of glutamine and ATP through an activated phospho-Asp-tRNA(Asn) or phospho-Glu-tRNA(Gln). In Lactobacillus johnsonii (strain CNCM I-12250 / La1 / NCC 533), this protein is Aspartyl/glutamyl-tRNA(Asn/Gln) amidotransferase subunit B.